A 1653-amino-acid chain; its full sequence is Clathrin heavy chain (1653 aa).

Positions 1-483 (MSDLPIEFTE…FDTTLALACY (483 aa)) are globular terminal domain. WD40-like repeat regions lie at residues 23 to 66 (FLDF…KNMG), 67 to 107 (GDSA…LDEP), 108 to 152 (VIFW…ANLN), 153 to 198 (NTQI…QAID), 199 to 263 (GHVA…PDAT), 264 to 307 (NDFP…ITAE), and 308 to 336 (SVFT…VEIS). A binding site for the uncoating ATPase, involved in lattice disassembly region spans residues 453–469 (EKWLKEDKLECSEELGD). The interval 484 to 527 (LRAGAHAKVISCLAELQQFEKIIPYCQKVGYQPNFLVLISSLIR) is flexible linker. Positions 528 to 1653 (SSPDRASEFA…SAMNVQPTGF (1126 aa)) are heavy chain arm. CHCR repeat units lie at residues 543–689 (NPET…QTVV), 692–834 (ATKF…DEAF), 839–978 (LQSV…QLID), 985–1130 (IPEL…IPDA), 1134–1275 (YIKA…FKLA), 1280–1426 (LNLI…SLLV), and 1429–1572 (LTSL…REGF). Residue K1107 forms a Glycyl lysine isopeptide (Lys-Gly) (interchain with G-Cter in ubiquitin) linkage. The interval 1219 to 1528 (AARLCYSAVS…LLYRRNKKWA (310 aa)) is involved in binding clathrin light chain.

This sequence belongs to the clathrin heavy chain family. In terms of assembly, clathrin triskelions, composed of 3 heavy chains and 3 light chains, are the basic subunits of the clathrin coat. Interacts with the auxilin-like clathrin uncoating factor SWA2. Interacts with INP53.

The protein localises to the cytoplasmic vesicle membrane. It localises to the membrane. The protein resides in the coated pit. Its function is as follows. Clathrin is the major protein of the polyhedral coat of coated pits and vesicles. In yeast, it is involved in the retention of proteins in an intracellular membrane compartment, presumably the trans-Golgi. The protein is Clathrin heavy chain (CHC1) of Saccharomyces cerevisiae (strain ATCC 204508 / S288c) (Baker's yeast).